Reading from the N-terminus, the 313-residue chain is MASSSSPCAACKFLRRKCTQECVFAPYFPPDQPQKFAFVHKVFGASNVAKLLNELASNQREDAVNSLFYEAEARLRDPVYGCVGLISILQHRLKQVNHDLENAKKELATYVGPQAMLPILQPHFMSLPPQPQRPSSSSASVLTQHHHNLLPMMAIPTGQLYHQQQQQIFEAQQLAAVAREQQNEMFRAYGGGGGSSSPHHQNQAQAEILRFNNGFDSVPAGSVTVTGFNQLSSGGTAVTGMSLGGNFVDSPSTNNNYHTDQQLHHHHQPQQHHEAQLFIPSQSSQPLPLQTQETQTQTQPNSESEEGRRNVIG.

The LOB domain occupies 6–107 (SPCAACKFLR…HDLENAKKEL (102 aa)). Positions 245-313 (GNFVDSPSTN…SEEGRRNVIG (69 aa)) are disordered. Positions 249 to 260 (DSPSTNNNYHTD) are enriched in polar residues. Residues 280-302 (PSQSSQPLPLQTQETQTQTQPNS) show a composition bias toward low complexity.

The protein belongs to the LOB domain-containing protein family. As to expression, expressed in trichomes, at the base of many lateral organs, including branching points of the inflorescence and floral organs and in the distal part of the pistil at stages when style and stigma start to develop. Also detected in pedicels and at the base of petals and sepals.

Functionally, controls the proximal-distal patterning in petals and the adaxial-abaxial determination of leaves. Involved in the repression of the homeobox gene BP. This chain is LOB domain-containing protein 36 (LBD36), found in Arabidopsis thaliana (Mouse-ear cress).